The sequence spans 248 residues: Myelin protein P0 (248 aa).

Residues 1–29 form the signal peptide; that stretch reads MAPGAPSSSPSPILAALLFSSLVLSPAQA. One can recognise an Ig-like V-type domain in the interval 30–143; sequence IVVYTDKEVY…DIVGKTSQVT (114 aa). Topologically, residues 30-153 are extracellular; it reads IVVYTDKEVY…LYVFEKVPTR (124 aa). C50 and C127 are oxidised to a cystine. N122 is a glycosylation site (N-linked (GlcNAc...) (complex) asparagine). A helical transmembrane segment spans residues 154 to 179; it reads YGVVLGAVIGGVLGVVLLVLLLFYVV. At 180–248 the chain is on the cytoplasmic side; the sequence is RYCWLRRQAA…GLGESRKDKK (69 aa). At S210 the chain carries Phosphoserine; by PKC. The disordered stretch occupies residues 222–248; that stretch reads MLDHSRSTKAASEKKAKGLGESRKDKK. Residues 224 to 248 show a composition bias toward basic and acidic residues; it reads DHSRSTKAASEKKAKGLGESRKDKK. 2 positions are modified to phosphoserine: S226 and S228. Residues S233 and S243 each carry the phosphoserine; by PKC modification.

The protein belongs to the myelin P0 protein family. In terms of assembly, homodimer and homotetramer. In terms of processing, N-glycosylated; contains sulfate-substituted glycan.

The protein resides in the cell membrane. Is an adhesion molecule necessary for normal myelination in the peripheral nervous system. It mediates adhesion between adjacent myelin wraps and ultimately drives myelin compaction. This is Myelin protein P0 (MPZ) from Equus caballus (Horse).